Here is a 65-residue protein sequence, read N- to C-terminus: Hainantoxin-X.2 (65 aa).

The N-terminal stretch at 1–20 (MNVKILVLVAVLCLVVSTHA) is a signal peptide. Positions 21-37 (ERHSKTDMEDSPMIQER) are excised as a propeptide. 3 disulfide bridges follow: Cys-39–Cys-56, Cys-46–Cys-59, and Cys-55–Cys-64.

Belongs to the neurotoxin 36 family. 02 subfamily. As to expression, expressed by the venom gland.

It is found in the secreted. Reversibly blocks N-type calcium channels (Cav2.2/CACNA1B) in rat dorsal root ganglion cells. Elicits no toxic symptoms in either vertebrates or invertebrates during a period of 48 hours post-injection, when it was assayed in vivo by direct injection into mice and cockroaches. This Cyriopagopus hainanus (Chinese bird spider) protein is Hainantoxin-X.2.